Consider the following 100-residue polypeptide: MGRVIRTRPVSGDLDRVFRDVCENNGVKVASAQLNRIESVFHRLSAFPRLGRDRSDLRPGLRTFSVKPWQVLYRLNGEDVVILRILDGRMNLAAQLGKKT.

Belongs to the RelE toxin family.

Its function is as follows. Toxic component of a type II toxin-antitoxin (TA) system. Its toxic effect is neutralized by coexpression with cognate antitoxin ParD3 but no other ParD or RelB antitoxin. The chain is Toxin ParE3 (parE3) from Caulobacter vibrioides (strain ATCC 19089 / CIP 103742 / CB 15) (Caulobacter crescentus).